A 640-amino-acid chain; its full sequence is 1,4-alpha-glucan branching enzyme GlgB (640 aa).

Catalysis depends on Asp-318, which acts as the Nucleophile. Catalysis depends on Glu-371, which acts as the Proton donor.

Belongs to the glycosyl hydrolase 13 family. GlgB subfamily. As to quaternary structure, monomer.

The catalysed reaction is Transfers a segment of a (1-&gt;4)-alpha-D-glucan chain to a primary hydroxy group in a similar glucan chain.. The protein operates within glycan biosynthesis; glycogen biosynthesis. Catalyzes the formation of the alpha-1,6-glucosidic linkages in glycogen by scission of a 1,4-alpha-linked oligosaccharide from growing alpha-1,4-glucan chains and the subsequent attachment of the oligosaccharide to the alpha-1,6 position. The polypeptide is 1,4-alpha-glucan branching enzyme GlgB (Francisella tularensis subsp. mediasiatica (strain FSC147)).